Reading from the N-terminus, the 293-residue chain is Ribokinase (293 aa).

Residues Ser11–Asp13, Gly39–Asn43, and Glu139 contribute to the substrate site. ATP is bound by residues Asn183 and Thr210–Gly215. K(+) is bound by residues Asp236 and Thr238. ATP is bound by residues Gly241–Asp242 and Asn266. Asp242 provides a ligand contact to substrate. Residue Asp242 is the Proton acceptor of the active site. K(+) is bound by residues Ser272, Ser275, and Gly277.

It belongs to the carbohydrate kinase PfkB family. Ribokinase subfamily. Homodimer. Mg(2+) serves as cofactor.

The protein resides in the cytoplasm. The enzyme catalyses D-ribose + ATP = D-ribose 5-phosphate + ADP + H(+). The protein operates within carbohydrate metabolism; D-ribose degradation; D-ribose 5-phosphate from beta-D-ribopyranose: step 2/2. Its activity is regulated as follows. Activated by a monovalent cation that binds near, but not in, the active site. The most likely occupant of the site in vivo is potassium. Ion binding induces a conformational change that may alter substrate affinity. Functionally, catalyzes the phosphorylation of ribose at O-5 in a reaction requiring ATP and magnesium. The resulting D-ribose-5-phosphate can then be used either for sythesis of nucleotides, histidine, and tryptophan, or as a component of the pentose phosphate pathway. This is Ribokinase from Bacillus subtilis (strain 168).